The following is a 122-amino-acid chain: Biogenesis of lysosome-related organelles complex 1 subunit CNL1 (122 aa).

Residues 1–10 are compositionally biased toward basic and acidic residues; it reads MQDNSSHSRE. The tract at residues 1–21 is disordered; that stretch reads MQDNSSHSRESASAGDDPLGI. The stretch at 63–95 forms a coiled coil; sequence ENTIDKNIAKFKELLEKCDTLENHYEMLNQLAI.

This sequence belongs to the BLOC1S4 family. As to quaternary structure, component of the biogenesis of lysosome-related organelles complex-1 (BLOC-1) composed of at least BLI1, BLS1, CNL1, KXD1, SNN1 and VAB2.

The protein localises to the cytoplasm. In terms of biological role, component of the biogenesis of lysosome-related organelles complex-1 (BLOC-1), a complex that is involved in endosomal cargo sorting. The sequence is that of Biogenesis of lysosome-related organelles complex 1 subunit CNL1 (CLN1) from Saccharomyces cerevisiae (strain RM11-1a) (Baker's yeast).